The chain runs to 156 residues: Lipoprotein signal peptidase (156 aa).

The next 3 helical transmembrane spans lie at 5 to 25 (FKFIFYFWGAFVLVFALDQWV), 64 to 84 (YLHLALIVVLFIYLFWQKTLL), and 89 to 109 (IAFGMMLGAGVSNLLDRFIHG). Residues D113 and D130 contribute to the active site. The chain crosses the membrane as a helical span at residues 122 to 142 (NFAIFNVADVMINISVALILI).

The protein belongs to the peptidase A8 family.

The protein resides in the cell inner membrane. The catalysed reaction is Release of signal peptides from bacterial membrane prolipoproteins. Hydrolyzes -Xaa-Yaa-Zaa-|-(S,diacylglyceryl)Cys-, in which Xaa is hydrophobic (preferably Leu), and Yaa (Ala or Ser) and Zaa (Gly or Ala) have small, neutral side chains.. It functions in the pathway protein modification; lipoprotein biosynthesis (signal peptide cleavage). In terms of biological role, this protein specifically catalyzes the removal of signal peptides from prolipoproteins. This Campylobacter jejuni subsp. jejuni serotype O:23/36 (strain 81-176) protein is Lipoprotein signal peptidase.